A 123-amino-acid polypeptide reads, in one-letter code: Holo-[acyl-carrier-protein] synthase (123 aa).

Mg(2+) contacts are provided by Asp8 and Glu60.

Belongs to the P-Pant transferase superfamily. AcpS family. Requires Mg(2+) as cofactor.

The protein localises to the cytoplasm. The catalysed reaction is apo-[ACP] + CoA = holo-[ACP] + adenosine 3',5'-bisphosphate + H(+). In terms of biological role, transfers the 4'-phosphopantetheine moiety from coenzyme A to a Ser of acyl-carrier-protein. The polypeptide is Holo-[acyl-carrier-protein] synthase (Ehrlichia ruminantium (strain Gardel)).